The sequence spans 152 residues: Small ribosomal subunit protein uS13 (152 aa).

The protein belongs to the universal ribosomal protein uS13 family.

The protein resides in the cytoplasm. In terms of biological role, located at the top of the head of the 40S subunit, it contacts several helices of the 18S rRNA. This chain is Small ribosomal subunit protein uS13 (RPS18), found in Argopecten irradians (Bay scallop).